The following is a 137-amino-acid chain: Large ribosomal subunit protein uL16 (137 aa).

Belongs to the universal ribosomal protein uL16 family. Part of the 50S ribosomal subunit.

Functionally, binds 23S rRNA and is also seen to make contacts with the A and possibly P site tRNAs. The sequence is that of Large ribosomal subunit protein uL16 from Xylella fastidiosa (strain M23).